The chain runs to 276 residues: Large ribosomal subunit protein uL2 (276 aa).

Positions 224 to 265 (GTAMNPIDHPHGGGEGKNFGKHPVSPWGVQTKGKRTRSNKRT) are disordered.

It belongs to the universal ribosomal protein uL2 family. In terms of assembly, part of the 50S ribosomal subunit. Forms a bridge to the 30S subunit in the 70S ribosome.

In terms of biological role, one of the primary rRNA binding proteins. Required for association of the 30S and 50S subunits to form the 70S ribosome, for tRNA binding and peptide bond formation. It has been suggested to have peptidyltransferase activity; this is somewhat controversial. Makes several contacts with the 16S rRNA in the 70S ribosome. This Blochmanniella floridana protein is Large ribosomal subunit protein uL2.